A 530-amino-acid polypeptide reads, in one-letter code: Probable cytochrome P450 519A1 (530 aa).

Residues 1–21 form a helical membrane-spanning segment; the sequence is MESIINLIFYIIIFLILIDFL. Cys-476 lines the heme pocket.

It belongs to the cytochrome P450 family. Heme is required as a cofactor.

It is found in the membrane. This chain is Probable cytochrome P450 519A1 (cyp519A1), found in Dictyostelium discoideum (Social amoeba).